A 520-amino-acid chain; its full sequence is Dihydropyrimidinase 2 (520 aa).

Zn(2+) is bound by residues His-59, His-61, and Lys-152. Lys-152 carries the N6-carboxylysine modification. Tyr-157 serves as a coordination point for substrate. His-185 and His-241 together coordinate Zn(2+). Ser-291 serves as a coordination point for substrate. Zn(2+) is bound at residue Asp-319. Residue Asn-340 coordinates substrate.

Belongs to the metallo-dependent hydrolases superfamily. Hydantoinase/dihydropyrimidinase family. As to quaternary structure, homotetramer. The cofactor is Zn(2+). Post-translationally, carboxylation allows a single lysine to coordinate two zinc ions. In terms of tissue distribution, body wall muscles.

It carries out the reaction 5,6-dihydrouracil + H2O = 3-(carbamoylamino)propanoate + H(+). In Caenorhabditis elegans, this protein is Dihydropyrimidinase 2 (dhp-2).